Consider the following 575-residue polypeptide: Jasmonoyl--L-amino acid synthetase JAR1 (575 aa).

Residues 10–30 (MNRVIDEFDEMTRNAHQVQKQ) adopt a coiled-coil conformation. ATP is bound at residue Ser-98. Ser-101 is a jasmonate binding site. ATP is bound by residues Met-118, Thr-121, Gly-163, Asn-168, and 331–336 (GSSEGW). 166 to 170 (TTNVY) contacts an L-alpha-amino acid. Residue 328–331 (HDYG) coordinates jasmonate. 530–534 (KIQEH) is a binding site for an L-alpha-amino acid. Lys-557 provides a ligand contact to ATP.

It belongs to the IAA-amido conjugating enzyme family. As to quaternary structure, interacts with GSTU20/FIP1 under continuous far red (cFR) light; this binding increases its activity and determines the priority of substrate binding.

It is found in the cytoplasm. It catalyses the reaction a jasmonate + an L-alpha-amino acid + ATP = a jasmonyl-L-amino acid + AMP + diphosphate + H(+). The catalysed reaction is (+)-7-isojasmonate + L-isoleucine + ATP = L-isoleucine-(+)-7-isojasmonate + AMP + diphosphate + H(+). With respect to regulation, activated by GSTU20/FIP1. Functionally, catalyzes the synthesis of jasmonates-amino acid conjugates by adenylation; can use Ile and, in vitro at least, Val, Leu and Phe as conjugating amino acids on jasmonic acid (JA) and 9,10-dihydro-JA substrates, and to a lower extent, on 3-oxo-2-(2Z-pentenyl)-cyclopentane-1-butyric acid (OPC-4) and 12-hydroxy-JA (12-OH-JA). Can synthesize adenosine 5-tetraphosphate in vitro. Required for the JA-mediated signaling pathway that regulates many developmental and defense mechanisms, including growth root inhibition, vegetative storage proteins (VSPs) accumulation, induced systemic resistance (ISR), response to wounding and herbivores, tolerance to ozone O(3) (probably having a role in lesion containment). Plays an important role in the accumulation of JA-Ile in response to wounding, both locally and systemically; promotes JA responding genes especially in distal part of wounded plants, via the JA-Ile-stimulated degradation of JAZ repressor proteins by the SCF(COI)E3 ubiquitin-protein ligase pathway. Involved in the apoptosis-like programmed cell death (PCD) induced by fungal toxin fumonisin B1-mediated (FB1). Required for volatile compounds (C6-aldehydes and allo-ocimene)-mediated defense activation. Involved in the non-pathogenic rhizobacterium-mediated ISR (defense priming) by P.fluorescens (strains CHAOr and WCS417r) and P.putida LSW17S against infection leaf pathogens such as P.syringae pv. tomato and H.parasitica. Required for the JA-dependent resistance to fungi such as P.irregulare, U.vignae and U.appendiculatus. Necessary to induce systemic resistance against R.solanaceraum and P.syringae pv. tomato with P.oligandrum (a non-pathogenic biocontrol agent) cell wall protein fraction (CWP). Mediates PGIP2 accumulation in response to B.cinerea infection and thus contributes to resistance against this pathogen. Modulates the UV-B alteration of leaves attractiveness to diamondback moths P.xylostella leading to insect oviposition. Involved in the regulation of far-red light influence on development, being an actor of the interplay between light and JA signaling. Seems necessary for the salicylic acid (SA)-mediated, NPR1-independent resistance pathway. May contribute to the chitin-elicited pathway. Contributes to the sensitivity toward F.graminearum. The protein is Jasmonoyl--L-amino acid synthetase JAR1 of Arabidopsis thaliana (Mouse-ear cress).